Reading from the N-terminus, the 957-residue chain is Translation initiation factor IF-2 (957 aa).

Disordered regions lie at residues 34 to 282 (KSHS…RVVK) and 311 to 367 (SQSL…TIAG). Pro residues predominate over residues 107-161 (PARPQPPQAPTRPTPPAPVAPKPVEPVAAKPPAPPAKPEPTPPRPVPTLVPPPTR). Basic and acidic residues predominate over residues 163 to 188 (TKKEEKVAATPPPRKELKEPPKKEKG). Residues 209 to 242 (PPAPAKPPEMAPKPALPELQPPPKPVRAPNPPKP) show a composition bias toward pro residues. Composition is skewed to basic and acidic residues over residues 250 to 259 (LDDKSVSKVI) and 266 to 275 (KDFDEEESKR). Residues 444–617 (RRPPVVTIMG…LLVAEVEDLY (174 aa)) enclose the tr-type G domain. The segment at 453–460 (GHVDHGKT) is G1. 453-460 (GHVDHGKT) lines the GTP pocket. Positions 478–482 (GITQH) are G2. The G3 stretch occupies residues 503–506 (DTPG). GTP contacts are provided by residues 503-507 (DTPGH) and 557-560 (NKID). The interval 557–560 (NKID) is G4. Residues 593–595 (SAL) form a G5 region.

Belongs to the TRAFAC class translation factor GTPase superfamily. Classic translation factor GTPase family. IF-2 subfamily.

It is found in the cytoplasm. In terms of biological role, one of the essential components for the initiation of protein synthesis. Protects formylmethionyl-tRNA from spontaneous hydrolysis and promotes its binding to the 30S ribosomal subunits. Also involved in the hydrolysis of GTP during the formation of the 70S ribosomal complex. The protein is Translation initiation factor IF-2 of Thermosynechococcus vestitus (strain NIES-2133 / IAM M-273 / BP-1).